The chain runs to 615 residues: Isocitrate dehydrogenase kinase/phosphatase (615 aa).

ATP is bound by residues 328–334 (APGIRGL) and lysine 349. The active site involves aspartate 384. The segment at 595 to 615 (AEPPATPPVKQPDAGPARRVA) is disordered.

This sequence belongs to the AceK family.

It localises to the cytoplasm. The catalysed reaction is L-seryl-[isocitrate dehydrogenase] + ATP = O-phospho-L-seryl-[isocitrate dehydrogenase] + ADP + H(+). Bifunctional enzyme which can phosphorylate or dephosphorylate isocitrate dehydrogenase (IDH) on a specific serine residue. This is a regulatory mechanism which enables bacteria to bypass the Krebs cycle via the glyoxylate shunt in response to the source of carbon. When bacteria are grown on glucose, IDH is fully active and unphosphorylated, but when grown on acetate or ethanol, the activity of IDH declines drastically concomitant with its phosphorylation. The protein is Isocitrate dehydrogenase kinase/phosphatase of Cupriavidus taiwanensis (strain DSM 17343 / BCRC 17206 / CCUG 44338 / CIP 107171 / LMG 19424 / R1) (Ralstonia taiwanensis (strain LMG 19424)).